The sequence spans 365 residues: Peptide chain release factor 2 (365 aa).

N5-methylglutamine is present on glutamine 249.

The protein belongs to the prokaryotic/mitochondrial release factor family. Post-translationally, methylated by PrmC. Methylation increases the termination efficiency of RF2.

The protein resides in the cytoplasm. Its function is as follows. Peptide chain release factor 2 directs the termination of translation in response to the peptide chain termination codons UGA and UAA. This chain is Peptide chain release factor 2, found in Acholeplasma laidlawii (strain PG-8A).